The primary structure comprises 218 residues: Pyridoxine/pyridoxamine 5'-phosphate oxidase (218 aa).

Residues Arg-14–Tyr-17 and Lys-72 each bind substrate. FMN-binding positions include Arg-67–Lys-72, Tyr-82–Thr-83, Arg-88, Lys-89, and Gln-111. Substrate-binding residues include Tyr-129, Arg-133, and Ser-137. Residues Gln-146–Ser-147 and Trp-191 each bind FMN. Arg-197–His-199 is a binding site for substrate. An FMN-binding site is contributed by Arg-201.

This sequence belongs to the pyridoxamine 5'-phosphate oxidase family. As to quaternary structure, homodimer. Requires FMN as cofactor.

The enzyme catalyses pyridoxamine 5'-phosphate + O2 + H2O = pyridoxal 5'-phosphate + H2O2 + NH4(+). The catalysed reaction is pyridoxine 5'-phosphate + O2 = pyridoxal 5'-phosphate + H2O2. The protein operates within cofactor metabolism; pyridoxal 5'-phosphate salvage; pyridoxal 5'-phosphate from pyridoxamine 5'-phosphate: step 1/1. It functions in the pathway cofactor metabolism; pyridoxal 5'-phosphate salvage; pyridoxal 5'-phosphate from pyridoxine 5'-phosphate: step 1/1. In terms of biological role, catalyzes the oxidation of either pyridoxine 5'-phosphate (PNP) or pyridoxamine 5'-phosphate (PMP) into pyridoxal 5'-phosphate (PLP). The polypeptide is Pyridoxine/pyridoxamine 5'-phosphate oxidase (Escherichia coli (strain SMS-3-5 / SECEC)).